The chain runs to 258 residues: MASAAAAEAEKGSPVVVGLLVVGNIIILLSGLSLFAETIWVTADQYRVYPLMGVSGKDDVFAGAWIAIFCGFSFFMVASFGVGAALCRRRSMVLTYLVLMLIVYIFECASCITSYTHRDYMVSNPSLITKQMLTFYSADTDQGQELTRLWDRVMIEQECCGTSGPMDWVNFTSAFRAATPEVVFPWPPLCCRRTGNFIPLNEEGCRLGHMDYLFTKGCFEHIGHAIDSYTWGISWFGFAILMWTLPVMLIAMYFYTML.

The Cytoplasmic segment spans residues 1–14; that stretch reads MASAAAAEAEKGSP. Residues 15–35 form a helical membrane-spanning segment; that stretch reads VVVGLLVVGNIIILLSGLSLF. Topologically, residues 36-59 are extracellular; that stretch reads AETIWVTADQYRVYPLMGVSGKDD. Residues 60 to 86 traverse the membrane as a helical segment; the sequence is VFAGAWIAIFCGFSFFMVASFGVGAAL. The Cytoplasmic segment spans residues 87–91; the sequence is CRRRS. The chain crosses the membrane as a helical span at residues 92–112; that stretch reads MVLTYLVLMLIVYIFECASCI. The Extracellular portion of the chain corresponds to 113–230; sequence TSYTHRDYMV…HIGHAIDSYT (118 aa). N-linked (GlcNAc...) asparagine glycosylation is present at asparagine 170. The chain crosses the membrane as a helical span at residues 231–252; it reads WGISWFGFAILMWTLPVMLIAM. Topologically, residues 253–258 are cytoplasmic; that stretch reads YFYTML.

It belongs to the tetraspanin (TM4SF) family. As to quaternary structure, homodimer; disulfide-linked. Interacts with uroplakin-2 (UPK2). As to expression, high expression restricted to ureteric urothelium (most superficial cells); low expression in prostate. Expression in normal urothelial cells is lost in culture. Some expression in tumor cell lines derived from urothelial malignancies.

It is found in the membrane. Component of the asymmetric unit membrane (AUM); a highly specialized biomembrane elaborated by terminally differentiated urothelial cells. May play an important role in normal bladder epithelial physiology, possibly in regulating membrane permeability of superficial umbrella cells or in stabilizing the apical membrane through AUM/cytoskeletal interactions. This chain is Uroplakin-1a (UPK1A), found in Homo sapiens (Human).